Here is a 161-residue protein sequence, read N- to C-terminus: MAKNTDRICFLVLRLLAFGATLSAAIVMATSHERTTYLSLSIEAKYSHTPAFKYFVIANAIGSAYSLLLLFLPSHGSLWPLVIASDVVITMFLTSSISAALSIAYVGKKGNSYAGWLPICDQVPNYCNHVTGALAAGFIGVVLYMVLLQYSIYTKCCKSSS.

The Cytoplasmic portion of the chain corresponds to 1-7 (MAKNTDR). The chain crosses the membrane as a helical span at residues 8–28 (ICFLVLRLLAFGATLSAAIVM). At 29–53 (ATSHERTTYLSLSIEAKYSHTPAFK) the chain is on the extracellular side. Residues 54–74 (YFVIANAIGSAYSLLLLFLPS) form a helical membrane-spanning segment. The Cytoplasmic segment spans residues 75 to 86 (HGSLWPLVIASD). Residues 87-107 (VVITMFLTSSISAALSIAYVG) traverse the membrane as a helical segment. Over 108–131 (KKGNSYAGWLPICDQVPNYCNHVT) the chain is Extracellular. A helical membrane pass occupies residues 132-152 (GALAAGFIGVVLYMVLLQYSI). The Cytoplasmic portion of the chain corresponds to 153-161 (YTKCCKSSS).

It belongs to the Casparian strip membrane proteins (CASP) family. In terms of assembly, homodimer and heterodimers.

The protein resides in the cell membrane. The chain is CASP-like protein 1C2 from Vitis vinifera (Grape).